The following is a 380-amino-acid chain: Probable inactive dehydrogenase easA (380 aa).

Residues 25–27 (PMT), Ala-60, Gln-102, and His-171 each bind FMN. Substrate contacts are provided by His-171 and Asn-174. FMN-binding positions include Lys-223, Gly-299, 324–325 (GR), and Arg-325. Tyr-352 serves as a coordination point for substrate.

Belongs to the NADH:flavin oxidoreductase/NADH oxidase family.

Probable inactive dehydrogenase; part of the gene cluster that mediates the biosynthesis of fungal ergot alkaloid. DmaW catalyzes the first step of ergot alkaloid biosynthesis by condensing dimethylallyl diphosphate (DMAP) and tryptophan to form 4-dimethylallyl-L-tryptophan. The second step is catalyzed by the methyltransferase easF that methylates 4-dimethylallyl-L-tryptophan in the presence of S-adenosyl-L-methionine, resulting in the formation of 4-dimethylallyl-L-abrine. The catalase easC and the FAD-dependent oxidoreductase easE then transform 4-dimethylallyl-L-abrine to chanoclavine-I which is further oxidized by easD in the presence of NAD(+), resulting in the formation of chanoclavine-I aldehyde. Agroclavine dehydrogenase easG then mediates the conversion of chanoclavine-I aldehyde to agroclavine via a non-enzymatic adduct reaction: the substrate is an iminium intermediate that is formed spontaneously from chanoclavine-I aldehyde in the presence of glutathione. The presence of easA is not required to complete this reaction. Further conversion of agroclavine to paspalic acid is a two-step process involving oxidation of agroclavine to elymoclavine and of elymoclavine to paspalic acid, the second step being performed by the elymoclavine oxidase cloA. Paspalic acid is then further converted to D-lysergic acid. Ergopeptines are assembled from D-lysergic acid and three different amino acids by the D-lysergyl-peptide-synthetases composed each of a monomudular and a trimodular nonribosomal peptide synthetase subunit. LpsB and lpsC encode the monomodular subunits responsible for D-lysergic acid activation and incorporation into the ergopeptine backbone. LpsA1 and A2 subunits encode the trimodular nonribosomal peptide synthetase assembling the tripeptide portion of ergopeptines. LpsA1 is responsible for formation of the major ergopeptine, ergotamine, and lpsA2 for alpha-ergocryptine, the minor ergopeptine of the total alkaloid mixture elaborated by C.purpurea. D-lysergyl-tripeptides are assembled by the nonribosomal peptide synthetases and released as N-(D-lysergyl-aminoacyl)-lactams. Cyclolization of the D-lysergyl-tripeptides is performed by the Fe(2+)/2-ketoglutarate-dependent dioxygenase easH which introduces a hydroxyl group into N-(D-lysergyl-aminoacyl)-lactam at alpha-C of the aminoacyl residue followed by spontaneous condensation with the terminal lactam carbonyl group. The polypeptide is Probable inactive dehydrogenase easA (Claviceps purpurea (Ergot fungus)).